The chain runs to 312 residues: Methionyl-tRNA formyltransferase (312 aa).

Ser107–Pro110 serves as a coordination point for (6S)-5,6,7,8-tetrahydrofolate.

The protein belongs to the Fmt family.

It carries out the reaction L-methionyl-tRNA(fMet) + (6R)-10-formyltetrahydrofolate = N-formyl-L-methionyl-tRNA(fMet) + (6S)-5,6,7,8-tetrahydrofolate + H(+). Attaches a formyl group to the free amino group of methionyl-tRNA(fMet). The formyl group appears to play a dual role in the initiator identity of N-formylmethionyl-tRNA by promoting its recognition by IF2 and preventing the misappropriation of this tRNA by the elongation apparatus. This chain is Methionyl-tRNA formyltransferase, found in Endomicrobium trichonymphae.